Reading from the N-terminus, the 153-residue chain is MARVTDKITHLIKPVIEGMGYELLGIEYVASGKYSILRIFIDTNKSISVNDCEIVSRQLSSIFDIEEPISGQYNLEVSSPGIERPLFHKGHYQCFLGFNVKLHMFRPISGQSNFFGVIGSVSEINNTIELVGELGAIILDIDLIKKANLVVDF.

The protein belongs to the RimP family.

It is found in the cytoplasm. Required for maturation of 30S ribosomal subunits. In Vesicomyosocius okutanii subsp. Calyptogena okutanii (strain HA), this protein is Ribosome maturation factor RimP.